Consider the following 272-residue polypeptide: Small ribosomal subunit protein mS23 (272 aa).

Residues 236–272 are disordered; the sequence is AGATGGAKEESDPAILPELEVAESTSESAQPAEIRTG.

The protein belongs to the mitochondrion-specific ribosomal protein mS23 family. As to quaternary structure, component of the mitochondrial small ribosomal subunit.

Its subcellular location is the mitochondrion. The chain is Small ribosomal subunit protein mS23 (RSM25) from Coccidioides immitis (strain RS) (Valley fever fungus).